Reading from the N-terminus, the 518-residue chain is Transcription factor TT8 (518 aa).

2 coiled-coil regions span residues 220-240 (EVHE…MSEE) and 405-428 (VNHL…KRTR). Residues 359-408 (REDLSHVVAERRRREKLNEKFITLRSMVPFVTKMDKVSILGDTIAYVNHL) enclose the bHLH domain.

This sequence belongs to the bHLH protein family. In terms of assembly, homodimer. Interacts with MYB4, MYB5, MYB6, MYB82, MYB113, MYB114, MYB75/PAP1, MYB90/PAP2, and TT2. As to expression, buds, flowers and developing siliques, but not in leaves, stems and roots.

Its subcellular location is the nucleus. Functionally, transcription activator, when associated with MYB75/PAP1 or MYB90/PAP2. Involved in the control of flavonoid pigmentation. Plays a key role in regulating leucoanthocyanidin reductase (BANYULS) and dihydroflavonol-4-reductase (DFR). Not required for leucoanthocyanidin dioxygenase (LDOX) expression. The polypeptide is Transcription factor TT8 (Arabidopsis thaliana (Mouse-ear cress)).